A 673-amino-acid chain; its full sequence is UvrABC system protein B (673 aa).

Residues 26 to 183 (EGLEDGLAHQ…RRLAELQYTR (158 aa)) enclose the Helicase ATP-binding domain. 39–46 (GVTGSGKT) serves as a coordination point for ATP. The Beta-hairpin signature appears at 92–115 (YYDYYQPEAYVPSSDTFIEKDASV). The Helicase C-terminal domain occupies 431–597 (QVDDLLSEIR…GLNKKVVDIL (167 aa)). The 36-residue stretch at 633–668 (QQKIHELEGQMMQHAQNLEFEEAAQIRDQLHQLREL) folds into the UVR domain.

The protein belongs to the UvrB family. As to quaternary structure, forms a heterotetramer with UvrA during the search for lesions. Interacts with UvrC in an incision complex.

It localises to the cytoplasm. The UvrABC repair system catalyzes the recognition and processing of DNA lesions. A damage recognition complex composed of 2 UvrA and 2 UvrB subunits scans DNA for abnormalities. Upon binding of the UvrA(2)B(2) complex to a putative damaged site, the DNA wraps around one UvrB monomer. DNA wrap is dependent on ATP binding by UvrB and probably causes local melting of the DNA helix, facilitating insertion of UvrB beta-hairpin between the DNA strands. Then UvrB probes one DNA strand for the presence of a lesion. If a lesion is found the UvrA subunits dissociate and the UvrB-DNA preincision complex is formed. This complex is subsequently bound by UvrC and the second UvrB is released. If no lesion is found, the DNA wraps around the other UvrB subunit that will check the other stand for damage. This chain is UvrABC system protein B, found in Salmonella agona (strain SL483).